A 363-amino-acid polypeptide reads, in one-letter code: Adenylate cyclase 2 (363 aa).

Positions 157–286 (VFLFIDLAGS…DTVNTTARLE (130 aa)) constitute a Guanylate cyclase domain. Residues Asp-162 and Asp-206 each coordinate Mg(2+). Residues 341–363 (GDGATEPAGETVRSPAAEAFTSL) form a disordered region.

It belongs to the adenylyl cyclase class-3 family. The cofactor is Mg(2+).

It carries out the reaction ATP = 3',5'-cyclic AMP + diphosphate. Functionally, plays essential roles in regulation of cellular metabolism by catalyzing the synthesis of a second messenger, cAMP. The sequence is that of Adenylate cyclase 2 (cya2) from Rhizobium meliloti (strain 1021) (Ensifer meliloti).